The following is a 180-amino-acid chain: uncharacterized protein (180 aa).

Residues 138-180 (SVMPVPMPQQNSDNGSTPHIVDSSKSKDKSSNDGDNGVFTGDE) form a disordered region. Residues 145–154 (PQQNSDNGST) are compositionally biased toward polar residues. Basic and acidic residues predominate over residues 159–169 (DSSKSKDKSSN).

This is an uncharacterized protein from Acidianus filamentous virus 2 (isolate Italy/Pozzuoli) (AFV-2).